A 259-amino-acid chain; its full sequence is Glucose-1-phosphate thymidylyltransferase (259 aa).

This sequence belongs to the inositol monophosphatase superfamily.

It catalyses the reaction dTTP + alpha-D-glucose 1-phosphate + H(+) = dTDP-alpha-D-glucose + diphosphate. Its pathway is antibiotic biosynthesis; streptomycin biosynthesis. The protein is Glucose-1-phosphate thymidylyltransferase (strO) of Streptomyces griseus.